The following is a 310-amino-acid chain: tRNA dimethylallyltransferase (310 aa).

14–21 (GPTASGKT) is an ATP binding site. 16–21 (TASGKT) serves as a coordination point for substrate. 3 interaction with substrate tRNA regions span residues 39–42 (DSAL), 163–167 (QRLSR), and 244–249 (RCVGYR).

This sequence belongs to the IPP transferase family. Monomer. Mg(2+) serves as cofactor.

The enzyme catalyses adenosine(37) in tRNA + dimethylallyl diphosphate = N(6)-dimethylallyladenosine(37) in tRNA + diphosphate. In terms of biological role, catalyzes the transfer of a dimethylallyl group onto the adenine at position 37 in tRNAs that read codons beginning with uridine, leading to the formation of N6-(dimethylallyl)adenosine (i(6)A). This chain is tRNA dimethylallyltransferase, found in Tolumonas auensis (strain DSM 9187 / NBRC 110442 / TA 4).